Consider the following 318-residue polypeptide: UAP56-interacting factor (318 aa).

Met-1 carries the N-acetylmethionine modification. Positions 1–25 (MNRFGTRLVGATATSSPPPKARSNE) are disordered. Thr-14 is modified (phosphothreonine). Phosphoserine occurs at positions 16 and 23. A UAP56-binding motif motif is present at residues 26 to 44 (NLDKIDMSLDDIIKLNRKE). A Phosphoserine modification is found at Ser-61. The segment at 79–100 (GFGKTSLNRRGRVMPGKRRPNG) is disordered. Residues 85-98 (LNRRGRVMPGKRRP) are compositionally biased toward basic residues. Residue Ser-118 is modified to Phosphoserine. A Glycyl lysine isopeptide (Lys-Gly) (interchain with G-Cter in SUMO1) cross-link involves residue Lys-140. Lys-261 is covalently cross-linked (Glycyl lysine isopeptide (Lys-Gly) (interchain with G-Cter in SUMO2)).

This sequence belongs to the UIF family. In terms of assembly, interacts with CHTOP. Interacts with DDX39B/UAP56 and NXF1; interaction with DDX39B/UAP56 and NXF1 are mutually exclusive. Interacts with SSRP1; required for its recruitment to mRNAs. In terms of tissue distribution, expressed in a wide variety of cancer types.

The protein resides in the nucleus. It is found in the nucleoplasm. The protein localises to the nucleus speckle. In terms of biological role, required for mRNA export from the nucleus to the cytoplasm. Acts as an adapter that uses the DDX39B/UAP56-NFX1 pathway to ensure efficient mRNA export and delivering to the nuclear pore. Associates with spliced and unspliced mRNAs simultaneously with ALYREF/THOC4. In Homo sapiens (Human), this protein is UAP56-interacting factor (FYTTD1).